The primary structure comprises 563 residues: GTPase Obg (563 aa).

The Obg domain maps to 2-168 (SDFVDRVTVH…RDVILELKSI (167 aa)). Positions 169 to 349 (ADVALVGFPS…LNFALSALVH (181 aa)) constitute an OBG-type G domain. GTP-binding positions include 175–182 (GFPSAGKS), 200–204 (FTTLV), 221–224 (DVPG), 301–304 (NKID), and 330–332 (STA). Residues serine 182 and threonine 202 each contribute to the Mg(2+) site. The 87-residue stretch at 383–469 (DEGGSALEFT…ARMVEFDWDP (87 aa)) folds into the OCT domain. The disordered stretch occupies residues 529-563 (RKAGHWADPTVDDDRHDETSLFGHGESSEDGETEE).

The protein belongs to the TRAFAC class OBG-HflX-like GTPase superfamily. OBG GTPase family. As to quaternary structure, monomer. Mg(2+) serves as cofactor.

It localises to the cytoplasm. Functionally, an essential GTPase which binds GTP, GDP and possibly (p)ppGpp with moderate affinity, with high nucleotide exchange rates and a fairly low GTP hydrolysis rate. Plays a role in control of the cell cycle, stress response, ribosome biogenesis and in those bacteria that undergo differentiation, in morphogenesis control. This chain is GTPase Obg, found in Bifidobacterium longum (strain NCC 2705).